We begin with the raw amino-acid sequence, 1045 residues long: Probable beta-glucosidase E (1045 aa).

The disordered stretch occupies residues 1–74 (MAPPDSTHGG…SGSYQLRPVD (74 aa)). At 1-163 (MAPPDSTHGG…PVKYARIWWR (163 aa)) the chain is on the cytoplasmic side. The span at 11–20 (SFRDHLKTND) shows a compositional bias: basic and acidic residues. Residues 164 to 184 (TLLAVIVTLAVVVWGFLSFAV) traverse the membrane as a helical; Signal-anchor for type II membrane protein segment. The Extracellular portion of the chain corresponds to 185–1045 (SHREEPKVWP…SRDLPLMGEY (861 aa)). N-linked (GlcNAc...) asparagine glycans are attached at residues asparagine 226, asparagine 234, and asparagine 402. Aspartate 430 is an active-site residue. Asparagine 473, asparagine 512, asparagine 577, asparagine 893, asparagine 902, and asparagine 988 each carry an N-linked (GlcNAc...) asparagine glycan.

The protein belongs to the glycosyl hydrolase 3 family.

It is found in the cell membrane. The enzyme catalyses Hydrolysis of terminal, non-reducing beta-D-glucosyl residues with release of beta-D-glucose.. Its pathway is glycan metabolism; cellulose degradation. Beta-glucosidases are one of a number of cellulolytic enzymes involved in the degradation of cellulosic biomass. Catalyzes the last step releasing glucose from the inhibitory cellobiose. The protein is Probable beta-glucosidase E (bglE) of Neosartorya fischeri (strain ATCC 1020 / DSM 3700 / CBS 544.65 / FGSC A1164 / JCM 1740 / NRRL 181 / WB 181) (Aspergillus fischerianus).